Here is a 427-residue protein sequence, read N- to C-terminus: ATP-dependent RNA helicase DDX39A (427 aa).

Residues 1–19 (MAEQDVENELLDYDEDEEP) show a composition bias toward acidic residues. A disordered region spans residues 1–35 (MAEQDVENELLDYDEDEEPQVPQESTPAPPKKDVK). N-acetylalanine is present on Ala2. Residue Lys31 forms a Glycyl lysine isopeptide (Lys-Gly) (interchain with G-Cter in SUMO2) linkage. N6-acetyllysine; alternate is present on Lys35. Lys35 is covalently cross-linked (Glycyl lysine isopeptide (Lys-Gly) (interchain with G-Cter in SUMO2); alternate). Ser37 carries the phosphoserine modification. The Q motif motif lies at 44–72 (SGFRDFLLKPELLRAIVDCGFEHPSEVQH). Positions 75-248 (IPQAILGMDV…RKFMQDPMEV (174 aa)) constitute a Helicase ATP-binding domain. ATP is bound at residue 88–95 (AKSGMGKT). Glycyl lysine isopeptide (Lys-Gly) (interchain with G-Cter in SUMO2) cross-links involve residues Lys154 and Lys162. A Phosphothreonine modification is found at Thr171. The short motif at 195-198 (DECD) is the DECD box element. Glycyl lysine isopeptide (Lys-Gly) (interchain with G-Cter in SUMO2) cross-links involve residues Lys240 and Lys255. One can recognise a Helicase C-terminal domain in the interval 260-421 (GLQQYYVKLK…ELPEEIDIST (162 aa)). Ser426 is modified (phosphoserine).

The protein belongs to the DEAD box helicase family. DECD subfamily. As to quaternary structure, binds ALYREF/THOC4 and DDX39B/BAT1. Interacts with the apo-AREX complex component SARNP. Interacts with MX1. Interacts with MCM3AP isoform GANP. Interacts with ECD. Interacts with PHAX; this interaction stimulates PHAX RNA binding activity. In terms of processing, SUMOylated by RANBP2; SUMOylation modification affects its ability to bind RNA.

It is found in the nucleus. It localises to the cytoplasm. It catalyses the reaction ATP + H2O = ADP + phosphate + H(+). Helicase that plays an essential role in mRNA export and is involved in multiple steps in RNA metabolism including alternative splicing. Regulates nuclear mRNA export to the cytoplasm through association with ECD. Also involved in spliceosomal uridine-rich small nuclear RNA (U snRNA) export by stimulating the RNA binding of adapter PHAX. Plays a role in the negative regulation of type I IFN production by increasing the nuclear retention of antiviral transcripts and thus reducing their protein expression. Independently of the interferon pathway, plays an antiviral role against alphaviruses by binding to a 5' conserved sequence element in the viral genomic RNA. This chain is ATP-dependent RNA helicase DDX39A (Ddx39a), found in Rattus norvegicus (Rat).